Consider the following 695-residue polypeptide: Potassium voltage-gated channel subfamily KQT member 4 (695 aa).

Residues 1–21 (MAEAPPRRLGLGPPPGDAPRA) are disordered. At 1–96 (MAEAPPRRLG…VYNVLERPRG (96 aa)) the chain is on the cytoplasmic side. Arginine 93 contacts a 1,2-diacyl-sn-glycero-3-phospho-(1D-myo-inositol-4,5-bisphosphate). A helical transmembrane segment spans residues 97-118 (WAFVYHVFIFLLVFSCLVLSVL). Over 119–129 (STIQEHQELAN) the chain is Extracellular. A helical transmembrane segment spans residues 130–152 (ECLLILEFVMIVVFGLEYIIRVW). Topologically, residues 153-168 (SAGCCCRYRGWQGRFR) are cytoplasmic. Residues 169–191 (FARKPFCVIDFIVFVASVAVIAA) form a helical membrane-spanning segment. An a 1,2-diacyl-sn-glycero-3-phospho-(1D-myo-inositol-4,5-bisphosphate)-binding site is contributed by lysine 172. Over 192 to 202 (GTQGNIFATSA) the chain is Extracellular. The chain crosses the membrane as a helical; Voltage-sensor span at residues 203-223 (LRSMRFLQILRMVRMDRRGGT). A 1,2-diacyl-sn-glycero-3-phospho-(1D-myo-inositol-4,5-bisphosphate)-binding residues include arginine 219, arginine 220, lysine 225, and serine 235. The Cytoplasmic portion of the chain corresponds to 224-235 (WKLLGSVVYAHS). A helical membrane pass occupies residues 236–258 (KELITAWYIGFLVLIFASFLVYL). Residues 259–270 (AEKDANSDFSSY) are Extracellular-facing. The segment at residues 271-292 (ADSLWWGTITLTTIGYGDKTPH) is an intramembrane region (pore-forming). A topological domain (extracellular) is located at residue threonine 293. A helical membrane pass occupies residues 294–322 (WLGRVLAAGFALLGISFFALPAGILGSGF). The Cytoplasmic segment spans residues 323–695 (ALKVQEQHRQ…ISRSVSTNMD (373 aa)). Positions 330 and 333 each coordinate a 1,2-diacyl-sn-glycero-3-phospho-(1D-myo-inositol-4,5-bisphosphate). The segment at 342 to 351 (AANLIQAAWR) is interaction with CALM. A disordered region spans residues 441–483 (RMSSSQKRTGPSKQHLAPPPIPTSPSSEQVGEASSPSKVQKSW). 2 stretches are compositionally biased toward polar residues: residues 442–452 (MSSSQKRTGPS) and 464–483 (SPSSEQVGEASSPSKVQKSW). An interaction with CALM region spans residues 535-549 (RSVRILKFLVAKRKF). Residues 546-650 (KRKFKETLRP…SRCLRSGTSA (105 aa)) are C-terminal assembly domain (tetramerization). The segment at 588–608 (GRGPGDRKTREKGDKGPSDTE) is disordered. The span at 591–605 (PGDRKTREKGDKGPS) shows a compositional bias: basic and acidic residues.

It belongs to the potassium channel family. KQT (TC 1.A.1.15) subfamily. Kv7.4/KCNQ4 sub-subfamily. Homotetramer. Interacts (via C-terminus) with calmodulin; forms a heterooctameric structure (with 4:4 KCNQ1:CALM stoichiometry); the interaction is calcium-independent, constitutive, participates in the proper assembly of a functional channel. The interaction with calcium-free CALM controls channel trafficking whereas interaction with calcium-bound CALM regulates channel gating. May form a functional heteromultimeric channel with KCNQ3. Interacts with HSP90AB1; promotes cell surface expression of KCNQ4. In terms of tissue distribution, expressed in both the inner (IHCs) and the outer hair cells (OHCs) of the cochlea. Reciprocal longitudinal gradients of expression is present in IHCs and OHCs. The strongest expression in IHCs is in the base of the cochlea and in the apex for OHCs. A basal to apical gradient of expression is also present in both type I and type II spiral ganglion cells.

It localises to the basal cell membrane. It catalyses the reaction K(+)(in) = K(+)(out). With respect to regulation, two molecules of phosphatidylinositol-4,5-bisphosphate (PIP2-I and PIP2-II) are essential to activate KCNQ4 channel by inducing the coupling of the voltage-sensing domain (VSD) and the pore-forming domain (PD). Upon channel activation, PIP2-I and PIP2-II disrupt the VSD-calmodulin/CALM interaction, causing the release of CALM from the VSD which triggers the opening of the gate. Calcium suppresses KCNQ4 channel current through calcium-bound CALM C-terminus. Therefore CALM acts as calcium sensor that controls channel activity. Pore-forming subunit of the voltage-gated potassium (Kv) channel involved in the regulation of sensory cells excitability in the cochlea. KCNQ4/Kv7.4 channel is composed of 4 pore-forming subunits assembled as tetramers. Promotes the outflow of potassium ions in the repolarization phase of action potential which plays a role in regulating membrane potential of excitable cells. The channel conducts a slowly activating and deactivating current. Current often shows some inward rectification at positive potentials. Channel may be selectively permeable in vitro to other cations besides potassium, in decreasing order of affinity K(+) = Rb(+) &gt; Cs(+) &gt; Na(+). Important for normal physiological function of inner ear such as sensory perception of sound. This is Potassium voltage-gated channel subfamily KQT member 4 from Rattus norvegicus (Rat).